Reading from the N-terminus, the 156-residue chain is Large ribosomal subunit protein uL22 (156 aa).

This sequence belongs to the universal ribosomal protein uL22 family. As to quaternary structure, part of the 50S ribosomal subunit.

This protein binds specifically to 23S rRNA. It makes multiple contacts with different domains of the 23S rRNA in the assembled 50S subunit and ribosome. Functionally, the globular domain of the protein is located near the polypeptide exit tunnel on the outside of the subunit, while an extended beta-hairpin is found that lines the wall of the exit tunnel in the center of the 70S ribosome. The sequence is that of Large ribosomal subunit protein uL22 from Methanocaldococcus jannaschii (strain ATCC 43067 / DSM 2661 / JAL-1 / JCM 10045 / NBRC 100440) (Methanococcus jannaschii).